Consider the following 245-residue polypeptide: Acetylglutamate kinase (245 aa).

Substrate-binding positions include 41 to 42, Arg-63, and Asn-156; that span reads GG.

The protein belongs to the acetylglutamate kinase family. ArgB subfamily.

It localises to the cytoplasm. It catalyses the reaction N-acetyl-L-glutamate + ATP = N-acetyl-L-glutamyl 5-phosphate + ADP. It participates in amino-acid biosynthesis; L-arginine biosynthesis; N(2)-acetyl-L-ornithine from L-glutamate: step 2/4. Functionally, catalyzes the ATP-dependent phosphorylation of N-acetyl-L-glutamate. This Streptococcus mutans serotype c (strain ATCC 700610 / UA159) protein is Acetylglutamate kinase.